A 398-amino-acid chain; its full sequence is MESGLLRPAPVSEVIVLHYNYTGKLRGARYQPGAGLRADAVVCLAVCAFIVLENLAVLLVLGRHPRFHAPMFLLLGSLTLSDLLAGAAYAANILLSGPLTLKLSPALWFAREGGVFVALTASVLSLLAIALERSLTMARRGPAPVSSRGRTLAMAAAAWGVSLLLGLLPALGWNCLGRLDACSTVLPLYAKAYVLFCVLAFVGILAAICALYARIYCQVRANARRLPARPGTAGTTSTRARRKPRSLALLRTLSVVLLAFVACWGPLFLLLLLDVACPARTCPVLLQADPFLGLAMANSLLNPIIYTLTNRDLRHALLRLVCCGRHSCGRDPSGSQQSASAAEASGGLRRCLPPGLDGSFSGSERSSPQRDGLDTSGSTGSPGAPTAARTLVSEPAAD.

At 1 to 40 the chain is on the extracellular side; it reads MESGLLRPAPVSEVIVLHYNYTGKLRGARYQPGAGLRADA. Residue Asn-20 is glycosylated (N-linked (GlcNAc...) asparagine). The chain crosses the membrane as a helical span at residues 41 to 61; that stretch reads VVCLAVCAFIVLENLAVLLVL. The Cytoplasmic portion of the chain corresponds to 62–70; sequence GRHPRFHAP. A helical membrane pass occupies residues 71–91; the sequence is MFLLLGSLTLSDLLAGAAYAA. Residues 92–111 are Extracellular-facing; sequence NILLSGPLTLKLSPALWFAR. The chain crosses the membrane as a helical span at residues 112–132; that stretch reads EGGVFVALTASVLSLLAIALE. Residues 133–151 are Cytoplasmic-facing; it reads RSLTMARRGPAPVSSRGRT. Residues 152 to 172 traverse the membrane as a helical segment; the sequence is LAMAAAAWGVSLLLGLLPALG. At 173–192 the chain is on the extracellular side; sequence WNCLGRLDACSTVLPLYAKA. Residues 193-213 traverse the membrane as a helical segment; sequence YVLFCVLAFVGILAAICALYA. Residues 214-252 are Cytoplasmic-facing; the sequence is RIYCQVRANARRLPARPGTAGTTSTRARRKPRSLALLRT. Residues 253 to 273 traverse the membrane as a helical segment; that stretch reads LSVVLLAFVACWGPLFLLLLL. At 274–287 the chain is on the extracellular side; sequence DVACPARTCPVLLQ. The chain crosses the membrane as a helical span at residues 288-308; it reads ADPFLGLAMANSLLNPIIYTL. Over 309–398 the chain is Cytoplasmic; sequence TNRDLRHALL…RTLVSEPAAD (90 aa). Cys-323 carries the S-palmitoyl cysteine lipid modification. Residues 329-398 form a disordered region; that stretch reads GRDPSGSQQS…RTLVSEPAAD (70 aa). Residues 333 to 347 are compositionally biased toward low complexity; that stretch reads SGSQQSASAAEASGG. Phosphoserine is present on Ser-381.

The protein belongs to the G-protein coupled receptor 1 family. In terms of tissue distribution, widely expressed in the brain, most prominently in the corpus callosum, which is predominantly white matter. Detected in spleen, peripheral blood leukocytes, placenta, lung, aorta and fetal spleen. Low-level signal detected in many tissue extracts. Overexpressed in leukemic large granular lymphocytes. Isoform 1 is predominantly expressed in peripheral tissues. Isoform 2 is expressed in brain, spleen and peripheral blood leukocytes.

Its subcellular location is the cell membrane. Its function is as follows. Receptor for the lysosphingolipid sphingosine 1-phosphate (S1P). S1P is a bioactive lysophospholipid that elicits diverse physiological effect on most types of cells and tissues. Is coupled to both the G(i/0)alpha and G(12) subclass of heteromeric G-proteins. May play a regulatory role in the transformation of radial glial cells into astrocytes and may affect proliferative activity of these cells. In Homo sapiens (Human), this protein is Sphingosine 1-phosphate receptor 5 (S1PR5).